The primary structure comprises 333 residues: T-cell surface glycoprotein CD1b (333 aa).

Positions 1-17 are cleaved as a signal peptide; it reads MLLLPFQLLAVLFPGGN. Topologically, residues 18–303 are extracellular; sequence SEHAFQGPTS…YWRNPTSIGS (286 aa). N-linked (GlcNAc...) asparagine glycans are attached at residues Asn38, Asn75, and Asn146. Cystine bridges form between Cys120–Cys184, Cys149–Cys163, and Cys224–Cys279. One can recognise an Ig-like domain in the interval 185–295; sequence PRYLLGVLNA…LEGQDIILYW (111 aa). A glycan (N-linked (GlcNAc...) asparagine) is linked at Asn258. The helical transmembrane segment at 304–324 threads the bilayer; it reads IVLAIIVPSLLLLLCLALWYM. Residues 325–333 are Cytoplasmic-facing; that stretch reads RRRSYQNIP. The Internalization signal motif lies at 329 to 332; the sequence is YQNI.

As to quaternary structure, heterodimer with B2M (beta-2-microglobulin). Interacts with saposin C. In terms of tissue distribution, expressed on cortical thymocytes, on certain T-cell leukemias, and in various other tissues.

The protein localises to the cell membrane. It localises to the endosome membrane. It is found in the lysosome membrane. Antigen-presenting protein that binds self and non-self lipid and glycolipid antigens and presents them to T-cell receptors on natural killer T-cells. This Homo sapiens (Human) protein is T-cell surface glycoprotein CD1b (CD1B).